The sequence spans 427 residues: Queuine tRNA-ribosyltransferase catalytic subunit (427 aa).

The active-site Proton acceptor is the aspartate 99. Substrate-binding positions include 99 to 103 (DSGGF), aspartate 153, glutamine 196, and glycine 223. Positions 254–260 (GVGFAAD) are RNA binding. Aspartate 273 functions as the Nucleophile in the catalytic mechanism. The segment at 278–282 (TRTAR) is RNA binding; important for wobble base 34 recognition. Zn(2+)-binding residues include cysteine 311, cysteine 313, cysteine 316, and histidine 341. The interval 395-427 (PADPERIDEQDQKPKTEKRRETEDVAEEQVASS) is disordered. Over residues 397–417 (DPERIDEQDQKPKTEKRRETE) the composition is skewed to basic and acidic residues.

Belongs to the queuine tRNA-ribosyltransferase family. In terms of assembly, heterodimer of a catalytic subunit and an accessory subunit. Zn(2+) is required as a cofactor.

The protein resides in the cytoplasm. It catalyses the reaction guanosine(34) in tRNA + queuine = queuosine(34) in tRNA + guanine. Its function is as follows. Catalytic subunit of the queuine tRNA-ribosyltransferase (TGT) that catalyzes the base-exchange of a guanine (G) residue with queuine (Q) at position 34 (anticodon wobble position) in tRNAs with GU(N) anticodons (tRNA-Asp, -Asn, -His and -Tyr), resulting in the hypermodified nucleoside queuosine (7-(((4,5-cis-dihydroxy-2-cyclopenten-1-yl)amino)methyl)-7-deazaguanosine). Catalysis occurs through a double-displacement mechanism. The nucleophile active site attacks the C1' of nucleotide 34 to detach the guanine base from the RNA, forming a covalent enzyme-RNA intermediate. The proton acceptor active site deprotonates the incoming queuine, allowing a nucleophilic attack on the C1' of the ribose to form the product. The chain is Queuine tRNA-ribosyltransferase catalytic subunit (Tgt) from Drosophila melanogaster (Fruit fly).